Reading from the N-terminus, the 162-residue chain is Protein snakeskin (162 aa).

Residues 2-6 (VSVET) lie on the Cytoplasmic side of the membrane. The helical transmembrane segment at 7-27 (VGSIFIKALKLIINLVIIFLY) threads the bilayer. The Extracellular segment spans residues 28-53 (RWGDGGEFLGIGGTWNLNEEKSADAE). The chain crosses the membrane as a helical span at residues 54-74 (IVASGVMVGFLIYTGCHTIAF). Topologically, residues 75 to 88 (AFGTTKHKGELCDT) are cytoplasmic. A helical transmembrane segment spans residues 89–109 (IMNVVGCIMWIAVGGVALHYW). Residues 110–128 (KGYMSDEGFLYVNSERQVG) are Extracellular-facing. A helical membrane pass occupies residues 129–149 (IAMGSLCVIEGALYLLDTVLA). Residues 150–162 (CIHYSKGDTDYTQ) lie on the Cytoplasmic side of the membrane.

In terms of assembly, forms a complex with Tsp2A and mesh. Interacts with mesh; the interaction may be necessary for the localization of both proteins to the cell apicolateral region.

The protein localises to the apicolateral cell membrane. It is found in the cell junction. It localises to the septate junction. Its function is as follows. Required for assembly of smooth septate junctions (sSJs), together with mesh and Tsp2A. May be important for barrier function of the midgut epithelium. This Drosophila melanogaster (Fruit fly) protein is Protein snakeskin.